The chain runs to 300 residues: Bifunctional protein FolD (300 aa).

NADP(+)-binding positions include 169 to 171 (GHS) and Ile235.

The protein belongs to the tetrahydrofolate dehydrogenase/cyclohydrolase family. In terms of assembly, homodimer.

It carries out the reaction (6R)-5,10-methylene-5,6,7,8-tetrahydrofolate + NADP(+) = (6R)-5,10-methenyltetrahydrofolate + NADPH. The enzyme catalyses (6R)-5,10-methenyltetrahydrofolate + H2O = (6R)-10-formyltetrahydrofolate + H(+). It participates in one-carbon metabolism; tetrahydrofolate interconversion. Functionally, catalyzes the oxidation of 5,10-methylenetetrahydrofolate to 5,10-methenyltetrahydrofolate and then the hydrolysis of 5,10-methenyltetrahydrofolate to 10-formyltetrahydrofolate. This is Bifunctional protein FolD from Rhodobacter capsulatus (strain ATCC BAA-309 / NBRC 16581 / SB1003).